A 786-amino-acid chain; its full sequence is Phenylalanine--tRNA ligase beta subunit (786 aa).

Positions 39–150 (LRAPDRVVVG…GELKLGKPLH (112 aa)) constitute a tRNA-binding domain. Positions 397-474 (YKPATITVDL…RLLGIDTILA (78 aa)) constitute a B5 domain. Mg(2+)-binding residues include aspartate 452, aspartate 458, glutamate 461, and glutamate 462. Positions 693-786 (SKFPKLQRDL…LNHRFGAKLR (94 aa)) constitute an FDX-ACB domain.

Belongs to the phenylalanyl-tRNA synthetase beta subunit family. Type 1 subfamily. As to quaternary structure, tetramer of two alpha and two beta subunits. The cofactor is Mg(2+).

The protein localises to the cytoplasm. It carries out the reaction tRNA(Phe) + L-phenylalanine + ATP = L-phenylalanyl-tRNA(Phe) + AMP + diphosphate + H(+). This Wolinella succinogenes (strain ATCC 29543 / DSM 1740 / CCUG 13145 / JCM 31913 / LMG 7466 / NCTC 11488 / FDC 602W) (Vibrio succinogenes) protein is Phenylalanine--tRNA ligase beta subunit.